Here is a 570-residue protein sequence, read N- to C-terminus: Interleukin-1 receptor accessory protein (570 aa).

An N-terminal signal peptide occupies residues 1–20; sequence MTLLWCVVSLYFYGILQSDA. 3 Ig-like C2-type domains span residues 21 to 128, 141 to 230, and 242 to 348; these read SERC…VAFP, PMKL…RTLT, and PPVI…AKVK. Over 21–367 the chain is Extracellular; sequence SERCDDWGLD…VELACGFGAT (347 aa). Intrachain disulfides connect C24-C122, C47-C114, C137-C181, C160-C212, and C266-C332. N57 is a glycosylation site (N-linked (GlcNAc...) asparagine). Positions 69–85 are essential for interaction with PTPRD; the sequence is IWYWTRQDRDLEEPINF. N-linked (GlcNAc...) asparagine glycans are attached at residues N107, N111, and N118. N-linked (GlcNAc...) asparagine glycosylation is found at N196, N209, and N299. A helical membrane pass occupies residues 368–388; that stretch reads VLLVVILIVVYHVYWLEMVLF. The Cytoplasmic portion of the chain corresponds to 389–570; that stretch reads YRAHFGTDET…GLSYSSLKNV (182 aa). Residues 403-546 form the TIR domain; it reads KEYDIYVSYA…RFWKQLQVAM (144 aa). The active site involves E482. The disordered stretch occupies residues 549–570; it reads KKSPRRSSSDEQGLSYSSLKNV. The residue at position 557 (S557) is a Phosphoserine. A compositionally biased stretch (polar residues) spans 558–570; sequence DEQGLSYSSLKNV.

The protein belongs to the interleukin-1 receptor family. The interleukin-36 receptor complex is a heterodimer of IL1RL2 and IL1RAP; the association is inhibited by IL36RN. The interleukin-1 receptor complex is a heterodimer of IL1R1 and IL1RAP. Associates with IL1R2 to form a non-signaling interleukin-1 receptor complex. Isoform 4 interacts with IL1R1 in an interleukin-1-dependent manner. Interacts with IL-33-bound IL1RL1 to form the minimal interleukin-33 signaling complex with a 1:1:1 stoichiometry. Interacts with KIT (independently of stimulation with KITLG/SCF). A mast cell-specific KITLG/SCF-induced interleukin-33 signaling complex contains IL1RL1, IL1RAP, KIT and MYD88. Interacts (via the first immunoglobilin domain) with PTPRD (via the third immunoglobilin domain); induces pre- and postsynaptic differentiation of neurons. As to expression, detected in liver, skin, placenta, thymus and lung. Isoform 4 is predominantly expressed in brain. Overexpressed on candidate chronic myeloid leukemia (CML) stem cells, hematopoietic stem cells and mononuclear cells of patients with acute myeloid leukemia (AML). Overexpressed in patients with chronic obstructive pulmonary disease (COPD). Expressed in T-helper 1 (Th1) and T-helper 2 (Th2) cell subsets.

It is found in the cell membrane. The protein resides in the secreted. The enzyme catalyses NAD(+) + H2O = ADP-D-ribose + nicotinamide + H(+). Functionally, coreceptor for IL1RL2 in the IL-36 signaling system. Coreceptor with IL1R1 in the IL-1 signaling system. Associates with IL1R1 bound to IL1B to form the high affinity interleukin-1 receptor complex which mediates interleukin-1-dependent activation of NF-kappa-B and other pathways. Signaling involves the recruitment of adapter molecules such as TOLLIP, MYD88, and IRAK1 or IRAK2 via the respective TIR domains of the receptor/coreceptor subunits. Recruits TOLLIP to the signaling complex. Does not bind to interleukin-1 alone; binding of IL1RN to IL1R1, prevents its association with IL1R1 to form a signaling complex. The cellular response is modulated through a non-signaling association with the membrane IL1R2 decoy receptor. Coreceptor for IL1RL1 in the IL-33 signaling system. Can bidirectionally induce pre- and postsynaptic differentiation of neurons by trans-synaptically binding to PTPRD. May play a role in IL1B-mediated costimulation of IFNG production from T-helper 1 (Th1) cells. Its function is as follows. Associates with secreted ligand-bound IL1R2 and increases the affinity of secreted IL1R2 for IL1B; this complex formation may be the dominant mechanism for neutralization of IL1B by secreted/soluble receptors. Enhances the ability of secreted IL1R1 to inhibit IL-33 signaling. Unable to mediate canonical IL-1 signaling. Required for Src phosphorylation by IL1B. May be involved in IL1B-potentiated NMDA-induced calcium influx in neurons. The chain is Interleukin-1 receptor accessory protein (IL1RAP) from Homo sapiens (Human).